A 136-amino-acid polypeptide reads, in one-letter code: Cytochrome b5 (136 aa).

The Cytochrome b5 heme-binding domain maps to threonine 5 to aspartate 81. Histidine 40 and histidine 64 together coordinate heme. The helical transmembrane segment at phenylalanine 107–isoleucine 127 threads the bilayer.

This sequence belongs to the cytochrome b5 family. As to expression, is highly expressed in developing seeds, moderately expressed in flowers, and is expressed at low levels in the leaf.

The protein localises to the endoplasmic reticulum membrane. The protein resides in the microsome membrane. Functionally, cytochrome b5 is a membrane bound hemoprotein which function as an electron carrier for several membrane bound oxygenases. May play a key role in the modification by desaturation of fatty acids in the endoplasmic reticulum, which in the developing seed is utilized for membrane synthesis and in the developmentally regulated production of large amounts of storage lipids. Is involved in the reduction of cytochrome P-450 and may therefore be involved in flavonoid biosynthesis in the petals. The sequence is that of Cytochrome b5 from Nicotiana tabacum (Common tobacco).